A 171-amino-acid polypeptide reads, in one-letter code: MISSPSTPATFAAGSLVLLCLVLGGGHFALAQKEGNDDIQHYTADDCQVTPVIHVLQYPGCVPKPIPSFACVGRCASYIQVSGSKIWQMERSCMCCQESGEREASVSLFCPKAKNGEKKFKKVSTKAPLECMCRPCTGIEDANVIPQELAAFADDGTLTSYFQKGQLRNSE.

Positions 1-31 (MISSPSTPATFAAGSLVLLCLVLGGGHFALA) are cleaved as a signal peptide. Cystine bridges form between C47-C96, C61-C110, C71-C131, C75-C133, and C93-C136. One can recognise a CTCK domain in the interval 47–137 (CQVTPVIHVL…PLECMCRPCT (91 aa)).

As to quaternary structure, heterodimer of burs and pburs.

The protein localises to the secreted. In terms of biological role, final heterodimeric neurohormone released at the end of the molting cycle, involved in the sclerotization (tanning) of the insect cuticle, melanization and wing spreading. This chain is Bursicon, found in Culex pipiens pipiens (Northern house mosquito).